Reading from the N-terminus, the 188-residue chain is Ribosome maturation factor RimM (188 aa).

The 75-residue stretch at 103 to 177 (EEGWYYADLI…RVVIDPPAGT (75 aa)) folds into the PRC barrel domain.

It belongs to the RimM family. In terms of assembly, binds ribosomal protein uS19.

Its subcellular location is the cytoplasm. Functionally, an accessory protein needed during the final step in the assembly of 30S ribosomal subunit, possibly for assembly of the head region. Essential for efficient processing of 16S rRNA. May be needed both before and after RbfA during the maturation of 16S rRNA. It has affinity for free ribosomal 30S subunits but not for 70S ribosomes. This Parvibaculum lavamentivorans (strain DS-1 / DSM 13023 / NCIMB 13966) protein is Ribosome maturation factor RimM.